Consider the following 394-residue polypeptide: Alanine--glyoxylate aminotransferase (394 aa).

Residues 76–78 (AGH), S153, and Q204 contribute to the pyridoxal 5'-phosphate site. Residue S153 coordinates substrate. K205 bears the N6-(pyridoxal phosphate)lysine mark. Y256 and T259 together coordinate pyridoxal 5'-phosphate. R356 lines the substrate pocket.

This sequence belongs to the class-V pyridoxal-phosphate-dependent aminotransferase family. In terms of assembly, homodimer. Requires pyridoxal 5'-phosphate as cofactor.

The protein resides in the peroxisome. The catalysed reaction is glyoxylate + L-alanine = glycine + pyruvate. It carries out the reaction (2S)-2-aminobutanoate + glyoxylate = 2-oxobutanoate + glycine. The enzyme catalyses glyoxylate + L-phenylalanine = 3-phenylpyruvate + glycine. It catalyses the reaction glyoxylate + L-serine = 3-hydroxypyruvate + glycine. The catalysed reaction is 2-oxobutanoate + L-alanine = (2S)-2-aminobutanoate + pyruvate. It carries out the reaction L-phenylalanine + pyruvate = 3-phenylpyruvate + L-alanine. The enzyme catalyses L-serine + pyruvate = 3-hydroxypyruvate + L-alanine. Catalyzes the pyridoxal 5'-phosphate-dependent transamination of alanine with glyoxylate as an amino group acceptor. Can also catalyze, although with much less efficiency, the transamination of amino-butyrate, phenylalanine and serine with glyoxylate or pyruvate as an amino group acceptor. Does not catalyze the transamination of both 3-hydroxykynurenine and L-kynurenine. May play a role in the detoxification of glyoxylate, a toxic plant metabolite from the fly diet. The sequence is that of Alanine--glyoxylate aminotransferase from Drosophila melanogaster (Fruit fly).